The sequence spans 444 residues: MLMHDVRPLPLDPNLLAILQAGSPTLWLNPHQGEPLPDFAPTAADLAEAGARLHRCAGLLAELFPELRPLGGRIASPLQPAEPLKRADHAQAGAWFVKRDDALPVAGSIKARGGFHEVLALAESIAERHGLVSAGADRRALASGEAHALFARHTVMVGSTGNLGLSIGMLASALGFRTVVHMSADAKAWKRARLRTRGVDVVEHAGDYAKAVDAGRRQAAGMPRCHFVDDEGSRMLFLGYATAAAELAAQLAQAGRPVDARHPLFVHLPCGVGGAPGGIAYGLKARYGEHVHVFVAEPTASPCVLVQLASGGAHPVSVYDVGLDNRTEADGLAVAQASHLAGPLLRAQAAGVFTVDDRQLFAHLLDARERLGIDLEPSAAAAFGGPAWLAGSEAGRAYLRGRGIVPEAATHVIWATGGSLVPAEEHRRFQARACAQRRESGAGA.

Position 110 is an N6-(pyridoxal phosphate)lysine (Lys110).

This sequence belongs to the serine/threonine dehydratase family. DsdA subfamily. The cofactor is pyridoxal 5'-phosphate.

It catalyses the reaction D-serine = pyruvate + NH4(+). This is Probable D-serine dehydratase from Burkholderia thailandensis (strain ATCC 700388 / DSM 13276 / CCUG 48851 / CIP 106301 / E264).